A 453-amino-acid polypeptide reads, in one-letter code: Ribosomal protein uS12 methylthiotransferase RimO (453 aa).

The 116-residue stretch at 5-120 (PKVGFVSLGC…VMQAVHSHLP (116 aa)) folds into the MTTase N-terminal domain. Residues Cys-14, Cys-50, Cys-79, Cys-151, Cys-155, and Cys-158 each contribute to the [4Fe-4S] cluster site. One can recognise a Radical SAM core domain in the interval 137 to 382 (LTPRHYAYLK…MEVAEEVSAN (246 aa)). Positions 385 to 453 (QRKVGKTLKV…ADGHDLWGEV (69 aa)) constitute a TRAM domain.

This sequence belongs to the methylthiotransferase family. RimO subfamily. [4Fe-4S] cluster serves as cofactor.

The protein resides in the cytoplasm. It catalyses the reaction L-aspartate(89)-[ribosomal protein uS12]-hydrogen + (sulfur carrier)-SH + AH2 + 2 S-adenosyl-L-methionine = 3-methylsulfanyl-L-aspartate(89)-[ribosomal protein uS12]-hydrogen + (sulfur carrier)-H + 5'-deoxyadenosine + L-methionine + A + S-adenosyl-L-homocysteine + 2 H(+). Catalyzes the methylthiolation of an aspartic acid residue of ribosomal protein uS12. This chain is Ribosomal protein uS12 methylthiotransferase RimO, found in Burkholderia cenocepacia (strain HI2424).